Here is a 1131-residue protein sequence, read N- to C-terminus: Probable chloride channel protein UM03490-D (1131 aa).

A run of 12 helical transmembrane segments spans residues 137–157 (GVIVLVGILIGLNMGVISLAT), 206–226 (VTVTASIGAAAAATDSAPILP), 305–325 (FPAWIIYMLFAGLLSFICAHL), 341–361 (IKCILAGFVINGYLGFWTLAI), 380–397 (GPAVHVACCIGNVVASFF), 414–434 (SSAAGVAVAFGSPIGGVLFSL), 485–505 (FEIMFYILIGIFGGLYGAFVI), 518–538 (YLVKHGVSEVVVLATLTAFVG), 577–597 (MVNSLLLATVLRTALVIVSYG), 603–623 (GIFVPSMAIGATFGRMVGILV), 643–663 (VPCITPGTYAFLGAAAALAGV), and 680–702 (ALTYILPTMIVVGITKGVADWFS). 2 disordered regions span residues 815–835 (DGVESSAHGAQQQQPDLLSVA) and 858–928 (ATGA…AGGG). Residues 866-877 (GLGSTSATGVAS) are compositionally biased toward low complexity. Positions 944–1000 (IDPTPLIVQPGMPLETVMDMFKNLGPRVILVVEYGRLSGLVTVKDVLKRIAMQEKAE) constitute a CBS domain. Residues 1061 to 1078 (RASASRGGAPGSQAGQAR) are compositionally biased toward low complexity. Positions 1061–1131 (RASASRGGAP…VLGAQDDDDE (71 aa)) are disordered. Over residues 1104-1113 (STRQTSATKN) the composition is skewed to polar residues.

Belongs to the chloride channel (TC 2.A.49) family.

The protein localises to the membrane. Its function is as follows. Voltage-gated chloride channel. This chain is Probable chloride channel protein UM03490-D, found in Mycosarcoma maydis (Corn smut fungus).